The primary structure comprises 329 residues: Glycerol-3-phosphate dehydrogenase [NAD(P)+] (329 aa).

Trp15, His35, and Lys107 together coordinate NADPH. Residues Lys107, Gly135, and Ser137 each contribute to the sn-glycerol 3-phosphate site. Ala139 contacts NADPH. Sn-glycerol 3-phosphate is bound by residues Lys190, Asp243, Ser253, Arg254, and Asn255. Lys190 functions as the Proton acceptor in the catalytic mechanism. Arg254 contacts NADPH. NADPH contacts are provided by Leu276 and Glu278.

The protein belongs to the NAD-dependent glycerol-3-phosphate dehydrogenase family.

It is found in the cytoplasm. The catalysed reaction is sn-glycerol 3-phosphate + NAD(+) = dihydroxyacetone phosphate + NADH + H(+). It catalyses the reaction sn-glycerol 3-phosphate + NADP(+) = dihydroxyacetone phosphate + NADPH + H(+). It functions in the pathway membrane lipid metabolism; glycerophospholipid metabolism. Its function is as follows. Catalyzes the reduction of the glycolytic intermediate dihydroxyacetone phosphate (DHAP) to sn-glycerol 3-phosphate (G3P), the key precursor for phospholipid synthesis. The chain is Glycerol-3-phosphate dehydrogenase [NAD(P)+] from Rhodopseudomonas palustris (strain TIE-1).